Consider the following 296-residue polypeptide: Gamma-D-glutamyl-L-lysine dipeptidyl-peptidase (296 aa).

Residues Y90, 199–201, and 218–219 each bind substrate; these read DCS and DA. A NlpC/P60 domain is found at 170 to 295; the sequence is KGTAEDIIQT…ELCAVRRCFS (126 aa). Catalysis depends on C200, which acts as the Nucleophile. The Proton acceptor role is filled by H253. H265 is an active-site residue.

It belongs to the peptidase C40 family.

It catalyses the reaction The enzyme releases L-Ala-gamma-D-Glu dipeptides from cell wall peptides via cleavage of an L-Ala-gamma-D-Glu-|-L-Lys bond.. The protein operates within cell wall degradation; peptidoglycan degradation. Functionally, specifically hydrolyzes gamma-D-glutamyl-L-lysine bonds in murein peptides, releasing L-Ala-D-Glu. This Bacillus subtilis (strain 168) protein is Gamma-D-glutamyl-L-lysine dipeptidyl-peptidase (ykfC).